We begin with the raw amino-acid sequence, 307 residues long: Streptomycin 6-kinase (307 aa).

A streptomycin-binding site is contributed by 133–145; it reads LAGLLNRLHSVPA. Residue aspartate 201 is the Proton acceptor of the active site.

It belongs to the aminoglycoside phosphotransferase family.

The catalysed reaction is streptomycin + ATP = streptomycin 6-phosphate + ADP + H(+). In terms of biological role, the aminoglycoside phosphotransferases achieve inactivation of their antibiotic substrates by phosphorylation. In Streptomyces griseus, this protein is Streptomycin 6-kinase (aphD).